A 203-amino-acid chain; its full sequence is uncharacterized protein (203 aa).

3 residues coordinate Fe cation: His-34, Glu-97, and His-172.

The protein belongs to the hemerythrin family.

Its subcellular location is the mitochondrion. This is an uncharacterized protein from Schizosaccharomyces pombe (strain 972 / ATCC 24843) (Fission yeast).